Consider the following 661-residue polypeptide: Putative DUF21 domain-containing protein At3g13070, chloroplastic (661 aa).

A chloroplast-targeting transit peptide spans 1–71 (MMGMALELSV…RSCEFSYRSR (71 aa)). 5 consecutive transmembrane segments (helical) span residues 105-125 (GIVI…KVLA), 162-182 (GLIL…ETSI), 213-233 (FLTT…ALVT), 239-259 (IFGE…ILLL), and 285-305 (WLSL…MGIL). The region spanning 154–340 (VLTVLREQGL…ELSGAIEEEE (187 aa)) is the CNNM transmembrane domain. CBS domains are found at residues 359–420 (MTPL…LLES) and 426–484 (MAHK…IFDE). Disordered regions lie at residues 559–578 (ESWE…QEPK) and 628–661 (SSEE…KKQQ). Composition is skewed to acidic residues over residues 560 to 570 (SWEEDGEEEEG) and 630 to 643 (EEDD…EDQS). Residues 648–661 (LDEHVLADNSKKQQ) show a composition bias toward basic and acidic residues.

The protein resides in the plastid. It is found in the chloroplast membrane. This chain is Putative DUF21 domain-containing protein At3g13070, chloroplastic (CBSDUFCH1), found in Arabidopsis thaliana (Mouse-ear cress).